Reading from the N-terminus, the 316-residue chain is Protoheme IX farnesyltransferase (316 aa).

Transmembrane regions (helical) follow at residues 34 to 54 (VMSL…GHIN), 55 to 75 (PFIG…SGAL), 95 to 115 (IPAG…LSAF), 118 to 138 (IILG…TIFF), 155 to 175 (IVIG…CVTG), 182 to 202 (IVLF…LALF), 228 to 250 (IVIY…FASL), 254 to 273 (AFAT…VLRM), and 287 to 307 (FAFS…DYAI).

It belongs to the UbiA prenyltransferase family. Protoheme IX farnesyltransferase subfamily.

The protein resides in the cell inner membrane. The catalysed reaction is heme b + (2E,6E)-farnesyl diphosphate + H2O = Fe(II)-heme o + diphosphate. It participates in porphyrin-containing compound metabolism; heme O biosynthesis; heme O from protoheme: step 1/1. Converts heme B (protoheme IX) to heme O by substitution of the vinyl group on carbon 2 of heme B porphyrin ring with a hydroxyethyl farnesyl side group. The protein is Protoheme IX farnesyltransferase of Rhizobium meliloti (strain 1021) (Ensifer meliloti).